The primary structure comprises 132 residues: Protein FAM174C (132 aa).

An N-terminal signal peptide occupies residues 1–26 (MGPRVLQPPLLLLLLALLLAALPCGA). Positions 34 to 66 (PAQVTLSPPPAVTNGSQPGAPHNSTHTRPPGAS) are disordered. Over residues 46-60 (TNGSQPGAPHNSTHT) the composition is skewed to polar residues. Residue asparagine 47 is glycosylated (N-linked (GlcNAc...) asparagine). Residues 73–93 (SFYVILGFCGLTALYFLIRAF) traverse the membrane as a helical segment. Residue threonine 113 is modified to Phosphothreonine. The tract at residues 113-132 (TEMASLDSDEETVFESRNLR) is disordered. Residues serine 117 and serine 120 each carry the phosphoserine modification.

This sequence belongs to the FAM174 family.

Its subcellular location is the membrane. In Homo sapiens (Human), this protein is Protein FAM174C.